The primary structure comprises 549 residues: Arginine--tRNA ligase (549 aa).

The 'HIGH' region motif lies at 122–132 (ANPTGFLHLGH).

This sequence belongs to the class-I aminoacyl-tRNA synthetase family. In terms of assembly, monomer.

The protein resides in the cytoplasm. The enzyme catalyses tRNA(Arg) + L-arginine + ATP = L-arginyl-tRNA(Arg) + AMP + diphosphate. The chain is Arginine--tRNA ligase from Mycoplasmoides gallisepticum (strain R(low / passage 15 / clone 2)) (Mycoplasma gallisepticum).